A 320-amino-acid polypeptide reads, in one-letter code: Foldase protein PrsA (320 aa).

Positions Met1–Ala20 are cleaved as a signal peptide. The N-palmitoyl cysteine moiety is linked to residue Cys21. The S-diacylglycerol cysteine moiety is linked to residue Cys21. Positions Glu139–Lys245 constitute a PpiC domain. Residues Glu159–Ala198 are disordered.

It belongs to the PrsA family.

It is found in the cell membrane. The catalysed reaction is [protein]-peptidylproline (omega=180) = [protein]-peptidylproline (omega=0). Plays a major role in protein secretion by helping the post-translocational extracellular folding of several secreted proteins. This is Foldase protein PrsA from Staphylococcus aureus (strain bovine RF122 / ET3-1).